The sequence spans 468 residues: 3-isopropylmalate dehydratase large subunit (468 aa).

Residues 53–74 (QPSKTVATMDHNVPTDSRDLAG) form a disordered region. Residues C347, C407, and C410 each coordinate [4Fe-4S] cluster.

It belongs to the aconitase/IPM isomerase family. LeuC type 1 subfamily. As to quaternary structure, heterodimer of LeuC and LeuD. [4Fe-4S] cluster serves as cofactor.

It catalyses the reaction (2R,3S)-3-isopropylmalate = (2S)-2-isopropylmalate. It participates in amino-acid biosynthesis; L-leucine biosynthesis; L-leucine from 3-methyl-2-oxobutanoate: step 2/4. Catalyzes the isomerization between 2-isopropylmalate and 3-isopropylmalate, via the formation of 2-isopropylmaleate. This Pasteurella multocida (strain Pm70) protein is 3-isopropylmalate dehydratase large subunit.